A 272-amino-acid chain; its full sequence is 4-hydroxy-tetrahydrodipicolinate reductase (272 aa).

NAD(+)-binding positions include 10–15, glutamate 36, 100–102, and 124–127; these read GAGGRM, GTT, and SGNM. Residue histidine 157 is the Proton donor/acceptor of the active site. (S)-2,3,4,5-tetrahydrodipicolinate is bound at residue histidine 158. The active-site Proton donor is the lysine 161. 167 to 168 contributes to the (S)-2,3,4,5-tetrahydrodipicolinate binding site; sequence GT.

This sequence belongs to the DapB family.

It localises to the cytoplasm. It carries out the reaction (S)-2,3,4,5-tetrahydrodipicolinate + NAD(+) + H2O = (2S,4S)-4-hydroxy-2,3,4,5-tetrahydrodipicolinate + NADH + H(+). The catalysed reaction is (S)-2,3,4,5-tetrahydrodipicolinate + NADP(+) + H2O = (2S,4S)-4-hydroxy-2,3,4,5-tetrahydrodipicolinate + NADPH + H(+). It participates in amino-acid biosynthesis; L-lysine biosynthesis via DAP pathway; (S)-tetrahydrodipicolinate from L-aspartate: step 4/4. Functionally, catalyzes the conversion of 4-hydroxy-tetrahydrodipicolinate (HTPA) to tetrahydrodipicolinate. The protein is 4-hydroxy-tetrahydrodipicolinate reductase of Afipia carboxidovorans (strain ATCC 49405 / DSM 1227 / KCTC 32145 / OM5) (Oligotropha carboxidovorans).